Reading from the N-terminus, the 127-residue chain is MNQTIKVKKKKKTITLGVVHIRASFNNTIVTFTDIQGNTISSASAGSNGFKGARKATPYAAQVTIDRASEKAKEYGLKTISIRIGGPGAQRESAMRALFGQNFVVTSILDVSSIAHNGVRPPKRRRV.

Belongs to the universal ribosomal protein uS11 family. In terms of assembly, part of the 30S ribosomal subunit. Interacts with proteins S7 and S18. Binds to IF-3.

Located on the platform of the 30S subunit, it bridges several disparate RNA helices of the 16S rRNA. Forms part of the Shine-Dalgarno cleft in the 70S ribosome. This chain is Small ribosomal subunit protein uS11, found in Rickettsia canadensis (strain McKiel).